The chain runs to 704 residues: SH3KBP1-binding protein 1 (704 aa).

Ala-2 is modified (N-acetylalanine). In terms of domain architecture, BTB spans 19–88; it reads EVIHLNVGGK…LRTKELDPRG (70 aa). Residues 145–165 form a disordered region; that stretch reads LVGPQQAGGRPAPVRRSNTMP. The residue at position 163 (Thr-163) is a Phosphothreonine. WD repeat units follow at residues 233-280, 283-322, 324-359, 428-466, and 548-586; these read RLDW…GGSE, VFHL…WQVQ, VQPI…LRMK, VHRS…GMIS, and LECE…DGLG. Low complexity predominate over residues 611 to 644; sequence ASSRGSLPSPSPRTSLTSLHSAFSNTSLSSRRGS. Positions 611–704 are disordered; it reads ASSRGSLPSP…PKTKLNETSF (94 aa). Positions 618 to 623 match the PXXXPR motif; it reads PSPSPR. Phosphoserine is present on residues Ser-644 and Ser-646. The PXXXPR signature appears at 678–683; sequence PTPAPR.

It belongs to the KCTD3 family. As to quaternary structure, monomer. Interacts with CUL3; interaction is direct and forms a 5:5 heterodecamer. Interacts (via PXXXPR motifs) with SH3KBP1 (via SH3 domains). Directly interacts with cathepsin B/CTSB.

It localises to the lysosome. In terms of biological role, inhibits CBL-SH3KBP1 complex mediated down-regulation of EGFR signaling by sequestration of SH3KBP1. Binds to SH3KBP1 and prevents its interaction with CBL and inhibits translocation of SH3KBP1 to EGFR containing vesicles upon EGF stimulation. This Bos taurus (Bovine) protein is SH3KBP1-binding protein 1 (SHKBP1).